Here is a 316-residue protein sequence, read N- to C-terminus: PAK4-inhibitor inka2 (316 aa).

2 disordered regions span residues 43 to 74 and 108 to 130; these read RSSP…SHRT and YSEV…ESET. Residues 65 to 74 are compositionally biased toward basic and acidic residues; it reads RRDNRISHRT. Acidic residues predominate over residues 119 to 129; that stretch reads EEDDIVEEESE. The segment at 182–219 is inka box; sequence DSQDWTGCLLSQSRSRQPLVLGDNSFADLVKQWMDLPE.

The protein belongs to the INKA family.

Its subcellular location is the nucleus. Inhibitor of the serine/threonine-protein kinase pak4/pak5. Acts by binding pak4/pak5 in a substrate-like manner, inhibiting the protein kinase activity. In Xenopus laevis (African clawed frog), this protein is PAK4-inhibitor inka2.